A 146-amino-acid polypeptide reads, in one-letter code: Aminoglycoside N(6')-acetyltransferase type 1 (146 aa).

An N-acetyltransferase domain is found at 1–146; sequence MIVICDHDNL…RVVFYRKTLG (146 aa). 4 residues coordinate substrate: W21, Y66, E79, and D115. N120 provides a ligand contact to acetyl-CoA. A substrate-binding site is contributed by E136.

As to quaternary structure, homodimer.

It catalyses the reaction kanamycin B + acetyl-CoA = N(6')-acetylkanamycin B + CoA + H(+). Catalyzes the transfer of an acetyl group from acetyl-CoA to the 6'-amino group of aminoglycoside molecules conferring resistance to antibiotics containing the purpurosamine ring including amikacin, tobramycin, netilmicin, isepamicin and sisomicin. This chain is Aminoglycoside N(6')-acetyltransferase type 1, found in Serratia marcescens.